A 297-amino-acid chain; its full sequence is Lymphocyte antigen 6 complex locus protein G6f (297 aa).

The signal sequence occupies residues 1-16 (MAVLFLLLFLCGTPQA). One can recognise an Ig-like V-type domain in the interval 17 to 122 (ADNMQAIYVA…HNYQNWRVYD (106 aa)). Topologically, residues 17 to 235 (ADNMQAIYVA…APSTGWDMPW (219 aa)) are extracellular. Cysteines 35 and 106 form a disulfide. N-linked (GlcNAc...) asparagine glycosylation is present at Asn88. A helical membrane pass occupies residues 236 to 256 (ILMLLLTMGQGVVILALSIVL). Residues 257–297 (WRQRVRGAPGRDASIPQFKPEIQVYENIHLARLGPPAHKPR) are Cytoplasmic-facing. Position 281 is a phosphotyrosine (Tyr281).

In terms of assembly, homodimer; disulfide-linked. Interacts with GRB2 and GRB7 in a phosphorylation-dependent manner. Post-translationally, N-glycosylated.

Its subcellular location is the cell membrane. Functionally, may play a role in the downstream signal transduction pathways involving GRB2 and GRB7. The polypeptide is Lymphocyte antigen 6 complex locus protein G6f (LY6G6F) (Homo sapiens (Human)).